An 80-amino-acid polypeptide reads, in one-letter code: AGLTKRSLFDPSCTGVFDRQLLRRLRRVCDDCFNVFREPNVSTECRSNCYNNEVFRQCMEYLLPPHLHEEHRLAVQMVGK.

Cystine bridges form between Cys13–Cys49, Cys29–Cys45, and Cys32–Cys58. Val78 is modified (valine amide).

This sequence belongs to the arthropod CHH/MIH/GIH/VIH hormone family. In terms of tissue distribution, produced by the medulla terminalis X-organ in the eyestalks and transported to the sinus gland where they are stored and released.

The protein localises to the secreted. Hormone found in the sinus gland of isopods and decapods which controls the blood sugar level. Has a secretagogue action over the amylase released from the midgut gland. May act as a stress hormone and may be involved in the control of molting and reproduction. The polypeptide is Crustacean hyperglycemic hormones (Penaeus vannamei (Whiteleg shrimp)).